The primary structure comprises 141 residues: Large ribosomal subunit protein uL11 (141 aa).

This sequence belongs to the universal ribosomal protein uL11 family. In terms of assembly, part of the ribosomal stalk of the 50S ribosomal subunit. Interacts with L10 and the large rRNA to form the base of the stalk. L10 forms an elongated spine to which L12 dimers bind in a sequential fashion forming a multimeric L10(L12)X complex. One or more lysine residues are methylated.

Functionally, forms part of the ribosomal stalk which helps the ribosome interact with GTP-bound translation factors. The sequence is that of Large ribosomal subunit protein uL11 from Levilactobacillus brevis (strain ATCC 367 / BCRC 12310 / CIP 105137 / JCM 1170 / LMG 11437 / NCIMB 947 / NCTC 947) (Lactobacillus brevis).